A 384-amino-acid polypeptide reads, in one-letter code: Glutamate 5-kinase (384 aa).

Lys-24 serves as a coordination point for ATP. Substrate is bound by residues Ser-64, Asp-149, and Asn-161. ATP-binding positions include 181 to 182 (TD) and 223 to 229 (TGGMRTK). The 83-residue stretch at 288–370 (PGAILIDAGA…RDIQTLLGYT (83 aa)) folds into the PUA domain.

Belongs to the glutamate 5-kinase family.

It is found in the cytoplasm. The enzyme catalyses L-glutamate + ATP = L-glutamyl 5-phosphate + ADP. The protein operates within amino-acid biosynthesis; L-proline biosynthesis; L-glutamate 5-semialdehyde from L-glutamate: step 1/2. Catalyzes the transfer of a phosphate group to glutamate to form L-glutamate 5-phosphate. The chain is Glutamate 5-kinase from Xylella fastidiosa (strain M23).